The primary structure comprises 622 residues: TAF6-like RNA polymerase II p300/CBP-associated factor-associated factor 65 kDa subunit 6L (622 aa).

2 disordered regions span residues 403-430 (QESS…GPED) and 457-546 (GTGQ…TRDV). Phosphoserine is present on residues S495 and S501. Residues 511–522 (ASASGPAASESR) show a composition bias toward low complexity. Residues R555, R561, and R593 each carry the asymmetric dimethylarginine modification.

Belongs to the TAF6 family. In terms of assembly, the PCAF complex is composed of a number of TBP-associated factors (TAFS), such as TAF5, TAF5L, TAF6, TAF6L, TAF9, TAF10 and TAF12, PCAF, and also PCAF-associated factors (PAFs), such as TADA2L/ADA2, TADA3L/ADA3 and SPT3. Component of the STAGA transcription coactivator-HAT complex, at least composed of SUPT3H, GCN5L2, TAF5L, TAF6L, SUPT7L, TADA3L, TAD1L, TAF10, TAF12, TRRAP and TAF9.

The protein localises to the nucleus. Functions as a component of the PCAF complex. The PCAF complex is capable of efficiently acetylating histones in a nucleosomal context. The PCAF complex could be considered as the human version of the yeast SAGA complex. With TAF5L, acts as an epigenetic regulator essential for somatic reprogramming. Regulates target genes through H3K9ac deposition and MYC recruitment which trigger MYC regulatory network to orchestrate gene expression programs to control embryonic stem cell state. Functions with MYC to activate target gene expression through RNA polymerase II pause release. The polypeptide is TAF6-like RNA polymerase II p300/CBP-associated factor-associated factor 65 kDa subunit 6L (Homo sapiens (Human)).